The chain runs to 66 residues: Nigrocin-2ISa (66 aa).

Residues 1–22 (MFTLKKSMLLLFFLGTINLSLC) form the signal peptide. Residues 23 to 43 (QEERDAEEERRDEDNAKMEEI) constitute a propeptide, removed in mature form. The cysteines at positions 60 and 66 are disulfide-linked.

As to expression, expressed by the skin glands.

The protein resides in the secreted. Has antimicrobial activity against Gram-negative bacterium E.coli ATCC 8739 (MIC=25 ug), against Gram positive bacteria S.aureus ATCC 6538 (MIC=3.1 ug), methicillin-resistant S.aureus ATCC 43300 (MIC=12.5 ug), B.subtilis ATCC 6633 (MIC=12.5 ug) and against fungus C.albicans ATCC 90028 (MIC=50 ug). The protein is Nigrocin-2ISa of Odorrana ishikawae (Ishikawa's frog).